Reading from the N-terminus, the 332-residue chain is Ketol-acid reductoisomerase (NAD(+)) (332 aa).

The region spanning 1–186 (MEILHDEDVD…HWTKAGILEC (186 aa)) is the KARI N-terminal Rossmann domain. NAD(+) contacts are provided by residues 24 to 27 (YGAQ), Glu-46, Asn-55, Ser-57, and 87 to 90 (DEVQ). Residue His-112 is part of the active site. Residue Gly-138 coordinates NAD(+). The KARI C-terminal knotted domain maps to 187-332 (TFEQETYEDL…AEIRKLFAQK (146 aa)). Mg(2+) is bound by residues Asp-195, Glu-199, Glu-231, and Glu-235. Ser-256 contributes to the substrate binding site.

Belongs to the ketol-acid reductoisomerase family. In terms of assembly, homodimer. Mg(2+) serves as cofactor.

It carries out the reaction (2R)-2,3-dihydroxy-3-methylbutanoate + NAD(+) = (2S)-2-acetolactate + NADH + H(+). It participates in amino-acid biosynthesis; L-isoleucine biosynthesis; L-isoleucine from 2-oxobutanoate: step 2/4. It functions in the pathway amino-acid biosynthesis; L-valine biosynthesis; L-valine from pyruvate: step 2/4. In terms of biological role, involved in the biosynthesis of branched-chain amino acids (BCAA). Catalyzes an alkyl-migration followed by a ketol-acid reduction of (S)-2-acetolactate (S2AL) to yield (R)-2,3-dihydroxy-isovalerate. In the isomerase reaction, S2AL is rearranged via a Mg-dependent methyl migration to produce 3-hydroxy-3-methyl-2-ketobutyrate (HMKB). In the reductase reaction, this 2-ketoacid undergoes a metal-dependent reduction by NADH to yield (R)-2,3-dihydroxy-isovalerate. The chain is Ketol-acid reductoisomerase (NAD(+)) from Uncultured archaeon GZfos26G2.